The chain runs to 203 residues: Large ribosomal subunit protein uL6 (203 aa).

It belongs to the universal ribosomal protein uL6 family. In terms of assembly, part of the 50S ribosomal subunit.

In terms of biological role, this protein binds to the 23S rRNA, and is important in its secondary structure. It is located near the subunit interface in the base of the L7/L12 stalk, and near the tRNA binding site of the peptidyltransferase center. This chain is Large ribosomal subunit protein uL6, found in Hyphomonas neptunium (strain ATCC 15444).